Consider the following 364-residue polypeptide: Aminomethyltransferase (364 aa).

Belongs to the GcvT family. In terms of assembly, the glycine cleavage system is composed of four proteins: P, T, L and H.

The enzyme catalyses N(6)-[(R)-S(8)-aminomethyldihydrolipoyl]-L-lysyl-[protein] + (6S)-5,6,7,8-tetrahydrofolate = N(6)-[(R)-dihydrolipoyl]-L-lysyl-[protein] + (6R)-5,10-methylene-5,6,7,8-tetrahydrofolate + NH4(+). Its function is as follows. The glycine cleavage system catalyzes the degradation of glycine. The protein is Aminomethyltransferase of Shewanella woodyi (strain ATCC 51908 / MS32).